We begin with the raw amino-acid sequence, 219 residues long: Protein GrpE (219 aa).

Disordered regions lie at residues methionine 1–threonine 32 and phenylalanine 59–threonine 87.

Belongs to the GrpE family. In terms of assembly, homodimer.

It localises to the cytoplasm. Participates actively in the response to hyperosmotic and heat shock by preventing the aggregation of stress-denatured proteins, in association with DnaK and GrpE. It is the nucleotide exchange factor for DnaK and may function as a thermosensor. Unfolded proteins bind initially to DnaJ; upon interaction with the DnaJ-bound protein, DnaK hydrolyzes its bound ATP, resulting in the formation of a stable complex. GrpE releases ADP from DnaK; ATP binding to DnaK triggers the release of the substrate protein, thus completing the reaction cycle. Several rounds of ATP-dependent interactions between DnaJ, DnaK and GrpE are required for fully efficient folding. The sequence is that of Protein GrpE from Corynebacterium diphtheriae (strain ATCC 700971 / NCTC 13129 / Biotype gravis).